A 319-amino-acid chain; its full sequence is uncharacterized protein (319 aa).

The interval 281 to 319 is disordered; it reads KVERKQRRRDDQNIMRSKLPQQRQNPFCSTERPKRARCD. Polar residues predominate over residues 299-308; sequence LPQQRQNPFC.

It is found in the cytoplasm. Its subcellular location is the nucleus. This is an uncharacterized protein from Saccharomyces cerevisiae (strain ATCC 204508 / S288c) (Baker's yeast).